A 216-amino-acid chain; its full sequence is Pyrophosphatase PpaX (216 aa).

Catalysis depends on aspartate 9, which acts as the Nucleophile.

It belongs to the HAD-like hydrolase superfamily. PpaX family. It depends on Mg(2+) as a cofactor.

The catalysed reaction is diphosphate + H2O = 2 phosphate + H(+). Its function is as follows. Hydrolyzes pyrophosphate formed during P-Ser-HPr dephosphorylation by HPrK/P. Might play a role in controlling the intracellular pyrophosphate pool. This chain is Pyrophosphatase PpaX, found in Bacillus cereus (strain G9842).